We begin with the raw amino-acid sequence, 135 residues long: Small ribosomal subunit protein bS6 (135 aa).

The interval 96-135 is disordered; the sequence is HAEGPSIQMQKRDERERGDRGDRSDRGDRGDRGDRGGFRR. Positions 105-135 are enriched in basic and acidic residues; that stretch reads QKRDERERGDRGDRSDRGDRGDRGDRGGFRR.

The protein belongs to the bacterial ribosomal protein bS6 family.

Binds together with bS18 to 16S ribosomal RNA. The polypeptide is Small ribosomal subunit protein bS6 (Cereibacter sphaeroides (strain ATCC 17029 / ATH 2.4.9) (Rhodobacter sphaeroides)).